Here is a 538-residue protein sequence, read N- to C-terminus: Syncytin-1 (538 aa).

Residues 1-20 (MALPYHIFLFTVLLPSFTLT) form the signal peptide. The Extracellular segment spans residues 21-443 (APPPCRCMTS…NTGPWGLLSQ (423 aa)). An N-linked (GlcNAc...) asparagine glycan is attached at N169. A CXXC motif is present at residues 186 to 189 (CWIC). Disulfide bonds link C186–C189, C186–C405, and C397–C404. N208, N214, N234, N242, and N281 each carry an N-linked (GlcNAc...) asparagine glycan. The segment at 320–340 (ILPFVIGAGVLGALGTGIGGI) is fusion peptide. Positions 380 to 396 (LQNRRALDLLTAERGGT) are immunosuppression. The CX6CC signature appears at 397 to 406 (CLFLGEECCY). N409 is a glycosylation site (N-linked (GlcNAc...) asparagine). Residues 444 to 464 (WMPWILPFLGPLAAIILLLLF) traverse the membrane as a helical segment. Positions 465 to 484 (GPCIFNLLVNFVSSRIEAVK) are essential for the fusiogenic function. The Cytoplasmic segment spans residues 465–538 (GPCIFNLLVN…LLRPNSAGSS (74 aa)). The disordered stretch occupies residues 496 to 538 (KIYRRPLDRPASPRSDVNDIKGTPPEEISAAQPLLRPNSAGSS).

The protein belongs to the gamma type-C retroviral envelope protein family. HERV class-I W env subfamily. In terms of assembly, the mature envelope protein (Env) consists of a trimer of SU-TM heterodimers attached probably by a labile interchain disulfide bond. Interacts with the C-type lectin CD209/DC-SIGN. In terms of processing, specific enzymatic cleavages in vivo yield mature proteins. Envelope glycoproteins are synthesized as an inactive precursor that is heavily N-glycosylated and processed likely by furin in the Golgi to yield the mature SU and TM proteins. The cleavage site between SU and TM requires the minimal sequence [KR]-X-[KR]-R. The intracytoplasmic tail cleavage by the viral protease that is required for the fusiogenic activity of some retroviruses envelope proteins seems to have been lost during evolution. The CXXC motif is highly conserved across a broad range of retroviral envelope proteins. It is thought to participate in the formation of a labile disulfide bond possibly with the CX6CC motif present in the transmembrane protein. Isomerization of the intersubunit disulfide bond to an SU intrachain disulfide bond is thought to occur upon receptor recognition in order to allow membrane fusion. In terms of tissue distribution, expressed at higher level in placental syncytiotrophoblast. Expressed at intermediate level in testis. Seems also to be found at low level in adrenal tissue, bone marrow, breast, colon, kidney, ovary, prostate, skin, spleen, thymus, thyroid, brain and trachea. Both mRNA and protein levels are significantly increased in the brain of individuals with multiple sclerosis, particularly in astrocytes and microglia.

The protein localises to the cell membrane. The protein resides in the virion. This endogenous retroviral envelope protein has retained its original fusogenic properties and participates in trophoblast fusion and the formation of a syncytium during placenta morphogenesis. May induce fusion through binding of SLC1A4 and SLC1A5. In terms of biological role, endogenous envelope proteins may have kept, lost or modified their original function during evolution. Retroviral envelope proteins mediate receptor recognition and membrane fusion during early infection. The surface protein (SU) mediates receptor recognition, while the transmembrane protein (TM) acts as a class I viral fusion protein. The protein may have at least 3 conformational states: pre-fusion native state, pre-hairpin intermediate state, and post-fusion hairpin state. During viral and target cell membrane fusion, the coiled coil regions (heptad repeats) assume a trimer-of-hairpins structure, positioning the fusion peptide in close proximity to the C-terminal region of the ectodomain. The formation of this structure appears to drive apposition and subsequent fusion of membranes. The polypeptide is Syncytin-1 (ERVW-1) (Homo sapiens (Human)).